Consider the following 317-residue polypeptide: Pseudouridine-5'-phosphate glycosidase (317 aa).

Glu27 functions as the Proton donor in the catalytic mechanism. Positions 89 and 109 each coordinate substrate. Asp141 contacts Mn(2+). A substrate-binding site is contributed by Ser143–Asp145. Lys162 acts as the Nucleophile in catalysis.

It belongs to the pseudouridine-5'-phosphate glycosidase family. Homotrimer. Requires Mn(2+) as cofactor.

The enzyme catalyses D-ribose 5-phosphate + uracil = psi-UMP + H2O. Catalyzes the reversible cleavage of pseudouridine 5'-phosphate (PsiMP) to ribose 5-phosphate and uracil. Functions biologically in the cleavage direction, as part of a pseudouridine degradation pathway. This Sorangium cellulosum (strain So ce56) (Polyangium cellulosum (strain So ce56)) protein is Pseudouridine-5'-phosphate glycosidase.